The following is a 58-amino-acid chain: Microcin J25 (58 aa).

A propeptide spanning residues 1 to 37 (MIKHFHFNKLSSGKKNNVPSPAKGVIQIKKSASQLTK) is cleaved from the precursor. The segment at residues 38 to 45 (GGAGHVPE) is a cross-link (isoglutamyl glycine isopeptide (Gly-Glu)).

It is found in the secreted. In terms of biological role, peptide antibiotic that functions through inhibition of the bacterial DNA-dependent RNA polymerase (RNAP). Inhibits transcription by binding deep within RNAP secondary channel, where it sterically blocks the folding of the trigger loop, which is essential for efficient catalysis. In addition, it also seems to restrict access of nucleotide substrates to the catalytic center, and shows a partially competitive mode of inhibition with them. Exhibits potent bacteriocidal activity against a range of Enterobacteriaceae, including several pathogenic E.coli, Salmonella and Shigella strains. Also acts on the cytoplasmic membrane of Salmonella newport, producing alteration of membrane permeability and disruption of the subsequent gradient dissipation, which inhibits several processes essential for cell viability, such as oxygen consumption. Induces bacterial filamentation in susceptible cells in a non-SOS-dependent way, but this phenotype may result from impaired transcription of genes coding for cell division proteins. This chain is Microcin J25 (mcjA), found in Escherichia coli.